Consider the following 247-residue polypeptide: Cell division protein ZapD (247 aa).

Belongs to the ZapD family. In terms of assembly, interacts with FtsZ.

Its subcellular location is the cytoplasm. Its function is as follows. Cell division factor that enhances FtsZ-ring assembly. Directly interacts with FtsZ and promotes bundling of FtsZ protofilaments, with a reduction in FtsZ GTPase activity. The chain is Cell division protein ZapD from Klebsiella pneumoniae subsp. pneumoniae (strain ATCC 700721 / MGH 78578).